The following is a 298-amino-acid chain: Ketohexokinase (298 aa).

Positions 15, 41, 42, and 45 each coordinate beta-D-fructose. ATP is bound by residues arginine 108, 226-229 (AEEG), and 255-258 (GAGD). Aspartate 258 provides a ligand contact to beta-D-fructose.

Belongs to the carbohydrate kinase PfkB family. As to quaternary structure, homodimer.

It carries out the reaction beta-D-fructose + ATP = beta-D-fructose 1-phosphate + ADP + H(+). Its pathway is carbohydrate metabolism; fructose metabolism. With respect to regulation, requires potassium. Inhibition by ADP. Catalyzes the phosphorylation of the ketose sugar fructose to fructose-1-phosphate. The polypeptide is Ketohexokinase (Mus musculus (Mouse)).